Consider the following 266-residue polypeptide: HTH-type transcriptional regulator MurR (266 aa).

Residues 1–77 (MLYLTKIRNA…MALIGEYSAS (77 aa)) enclose the HTH rpiR-type domain. A DNA-binding region (H-T-H motif) is located at residues 37–56 (SRQMAKQLGISQSSIVKFAQ). In terms of domain architecture, SIS spans 128 to 266 (IIEVISKAPF…LLFVGLVQHQ (139 aa)).

Homotetramer.

It functions in the pathway amino-sugar metabolism; N-acetylmuramate degradation [regulation]. Its function is as follows. Represses the expression of the murPQ operon involved in the uptake and degradation of N-acetylmuramic acid (MurNAc). Binds to two adjacent inverted repeats within the operator region. MurNAc 6-phosphate, the substrate of MurQ, is the specific inducer that weakens binding of MurR to the operator. This is HTH-type transcriptional regulator MurR from Shigella flexneri serotype 5b (strain 8401).